The primary structure comprises 1336 residues: Immunoglobulin superfamily member 1 (1336 aa).

The first 28 residues, 1–28 (MTLDRPGEGATMLKTFTVLLFCIRMSLG), serve as a signal peptide directing secretion. The Extracellular segment spans residues 29 to 518 (MTSIVMDPQP…GYLTWNYVLN (490 aa)). Ig-like C2-type domains are found at residues 38-122 (PELW…KVLE), 137-222 (QAET…LVVA), 226-312 (PKPT…SDVL), 321-408 (PKTW…PSHN), and 419-500 (PKPS…HRSE). N53 carries an N-linked (GlcNAc...) asparagine glycan. C58 and C106 form a disulfide bridge. The cysteines at positions 248 and 296 are disulfide-linked. N-linked (GlcNAc...) asparagine glycans are attached at residues N338, N374, and N381. 2 cysteine pairs are disulfide-bonded: C343–C392 and C441–C484. The chain crosses the membrane as a helical span at residues 519–539 (EAIRLSLIMQLVALLLVVLWI). Residues 540-559 (RWKCRRLRIREAWLLGTAQG) lie on the Cytoplasmic side of the membrane. A helical transmembrane segment spans residues 560 to 580 (VTMLFIVTALLCCGLCNGVLI). The Extracellular segment spans residues 581-1336 (EETEIVMPTP…RISVELPVPI (756 aa)). 7 Ig-like C2-type domains span residues 589–677 (TPKP…ALEL), 686–760 (PVIS…RPFK), 777–869 (PKPF…LVVT), 873–958 (PKPT…YLSM), 965–1060 (TDTF…ELLV), 1065–1150 (PKPS…NHSD), and 1161–1242 (PKPS…EPSD). Residues N607, N747, N798, N846, N939, N986, N1027, and N1082 are each glycosylated (N-linked (GlcNAc...) asparagine). C703 and C750 are joined by a disulfide. Intrachain disulfides connect C799–C849 and C895–C942. The cysteines at positions 1087 and 1134 are disulfide-linked. N-linked (GlcNAc...) asparagine glycosylation is found at N1147 and N1223. Cysteines 1183 and 1226 form a disulfide. The disordered stretch occupies residues 1308-1336 (CNQEGEPGTPANSPSSTSQRISVELPVPI). Residues 1317-1328 (PANSPSSTSQRI) are compositionally biased toward polar residues.

Interacts with INHA. In PubMed:12385827 does not interact with INHA; standard receptor binding assay. Interacts with ACVR1B; the interaction appears to be ligand-dependent as it is diminished by inhibin B and activin A. Interacts with ACVR2A, ACVR2B, ACVRL1 and BMPR1B. Interacts with HECTD1. As to expression, highly expressed in pancreas, testis and fetal liver. Moderately expressed in heart, prostate and small intestine. Expressed at very low levels in brain, thymus, ovary, colon, fetal lung and fetal kidney. Expressed in muscle. Isoform 3 is expressed in pituitary gland.

It localises to the membrane. The protein localises to the secreted. Functionally, seems to be a coreceptor in inhibin signaling, but seems not to be a high-affinity inhibin receptor. Antagonizes activin A signaling in the presence or absence of inhibin B. Necessary to mediate a specific antagonistic effect of inhibin B on activin-stimulated transcription. The chain is Immunoglobulin superfamily member 1 (IGSF1) from Homo sapiens (Human).